A 265-amino-acid chain; its full sequence is MLLAIDVGNTNIVLGLYADEPAEGADPVLVRDWRMRTEPRMTADELALTVRGLLGSYADRITGISALSTVPSLLRELRVMLGRYWTDVPRVVVEPGVRTGVPLLVDNPKEVGADRVINTLAAHHLHATNCVVVDFGTSTNIDAISAKGEFLGGAFAPGIEISLDALASRAAQLRKVELVRPRSVIGKNTVECLQSGILYGFAGQVDGLVRRIVAELESTHGGPTTVIGTGGLAPLVVTESDTISHHVPDLTLLGLRLVYDRNFGS.

6-13 (DVGNTNIV) is a binding site for ATP. 112–115 (GADR) is a binding site for substrate. Residue aspartate 114 is the Proton acceptor of the active site. Residue aspartate 134 participates in K(+) binding. Threonine 137 lines the ATP pocket. Threonine 189 is a binding site for substrate.

This sequence belongs to the type III pantothenate kinase family. As to quaternary structure, homodimer. Requires NH4(+) as cofactor. K(+) is required as a cofactor.

The protein localises to the cytoplasm. It carries out the reaction (R)-pantothenate + ATP = (R)-4'-phosphopantothenate + ADP + H(+). Its pathway is cofactor biosynthesis; coenzyme A biosynthesis; CoA from (R)-pantothenate: step 1/5. Catalyzes the phosphorylation of pantothenate (Pan), the first step in CoA biosynthesis. This Saccharopolyspora erythraea (strain ATCC 11635 / DSM 40517 / JCM 4748 / NBRC 13426 / NCIMB 8594 / NRRL 2338) protein is Type III pantothenate kinase.